The following is a 403-amino-acid chain: Ribosomal RNA large subunit methyltransferase I (403 aa).

In terms of domain architecture, PUA spans 9 to 88 (YPRLVLSKGR…ESIDIAFFTR (80 aa)).

Belongs to the methyltransferase superfamily. RlmI family.

It localises to the cytoplasm. It carries out the reaction cytidine(1962) in 23S rRNA + S-adenosyl-L-methionine = 5-methylcytidine(1962) in 23S rRNA + S-adenosyl-L-homocysteine + H(+). Its function is as follows. Specifically methylates the cytosine at position 1962 (m5C1962) of 23S rRNA. The sequence is that of Ribosomal RNA large subunit methyltransferase I from Salmonella enteritidis PT4 (strain P125109).